The sequence spans 523 residues: Leucine-rich repeat-containing protein 27 (523 aa).

A disordered region spans residues 1–26 (MEDTSPQAVAEKAAKDPKAAKDLKDD). The span at 12–26 (KAAKDPKAAKDLKDD) shows a compositional bias: basic and acidic residues. LRR repeat units lie at residues 55–76 (SSPV…FKIP), 77–98 (NLQQ…FFQL), 101–122 (NLTW…IGSH), 124–145 (HLKT…LGQV), and 147–168 (TLTA…IVQK). Disordered stretches follow at residues 206 to 236 (QYPV…ADFF) and 372 to 394 (REQT…HSNM). Basic and acidic residues-rich tracts occupy residues 227–236 (DQEKEKADFF) and 372–385 (REQT…RELS). Coiled-coil stretches lie at residues 335 to 374 (VHAN…WREQ) and 463 to 494 (MQDI…TLNK). The tract at residues 503 to 523 (GNLSLHPPASQPQNIFFNTKS) is disordered. Residues 513 to 523 (QPQNIFFNTKS) are compositionally biased toward polar residues.

This chain is Leucine-rich repeat-containing protein 27 (Lrrc27), found in Mus musculus (Mouse).